Reading from the N-terminus, the 312-residue chain is Glyoxylate/hydroxypyruvate reductase A (312 aa).

Residue arginine 227 is part of the active site. The Proton donor role is filled by histidine 275.

This sequence belongs to the D-isomer specific 2-hydroxyacid dehydrogenase family. GhrA subfamily.

It localises to the cytoplasm. The enzyme catalyses glycolate + NADP(+) = glyoxylate + NADPH + H(+). It carries out the reaction (R)-glycerate + NAD(+) = 3-hydroxypyruvate + NADH + H(+). The catalysed reaction is (R)-glycerate + NADP(+) = 3-hydroxypyruvate + NADPH + H(+). Its function is as follows. Catalyzes the NADPH-dependent reduction of glyoxylate and hydroxypyruvate into glycolate and glycerate, respectively. This Escherichia coli O17:K52:H18 (strain UMN026 / ExPEC) protein is Glyoxylate/hydroxypyruvate reductase A.